Consider the following 303-residue polypeptide: Coenzyme PQQ synthesis protein B (303 aa).

The protein belongs to the PqqB family.

The protein operates within cofactor biosynthesis; pyrroloquinoline quinone biosynthesis. Functionally, may be involved in the transport of PQQ or its precursor to the periplasm. The chain is Coenzyme PQQ synthesis protein B from Acinetobacter baumannii (strain SDF).